Here is a 330-residue protein sequence, read N- to C-terminus: uncharacterized protein (330 aa).

Residues 4–242 form the ABC transporter domain; the sequence is LSIQNLVVEY…AGEVLFEQST (239 aa). 40 to 47 is an ATP binding site; the sequence is GPSGCGKT. 210-330 is a binding site for a nucleoside 3',5'-cyclic phosphate; the sequence is DRVVELTPDF…LIEHRALAND (121 aa).

This sequence belongs to the ABC transporter superfamily. In terms of assembly, the complex is composed of two ATP-binding proteins (MT0079), two transmembrane proteins (MT0078) and a solute-binding protein.

In terms of biological role, probably part of an ABC transporter complex. Probably responsible for energy coupling to the transport system. This is an uncharacterized protein from Mycobacterium tuberculosis (strain CDC 1551 / Oshkosh).